Consider the following 318-residue polypeptide: Protease HtpX homolog (318 aa).

3 helical membrane passes run 1–21 (MLEAAGAVLLGSAALLMVGRL), 35–55 (ILGLLVGILSLALAALTGSAI), and 56–76 (AGLVVGVITAAMMYLFSSRIV). His-167 is a binding site for Zn(2+). Residue Glu-168 is part of the active site. Residue His-171 coordinates Zn(2+). A run of 2 helical transmembrane segments spans residues 178 to 198 (LVMTVAAAVSTAIAYAFDPWL) and 209 to 229 (IAFLVLAGMLASLISTLLVAA). Glu-235 contacts Zn(2+).

It belongs to the peptidase M48B family. Zn(2+) serves as cofactor.

It localises to the cell membrane. This chain is Protease HtpX homolog, found in Methanopyrus kandleri (strain AV19 / DSM 6324 / JCM 9639 / NBRC 100938).